Here is a 39-residue protein sequence, read N- to C-terminus: uncharacterized protein (39 aa).

It belongs to the orthopoxvirus A30.5 protein family.

This is an uncharacterized protein from Bos taurus (Bovine).